The chain runs to 91 residues: Small ribosomal subunit protein uS19 (91 aa).

Belongs to the universal ribosomal protein uS19 family.

Protein S19 forms a complex with S13 that binds strongly to the 16S ribosomal RNA. In Synechococcus sp. (strain WH7803), this protein is Small ribosomal subunit protein uS19.